A 160-amino-acid polypeptide reads, in one-letter code: Nucleotide-binding protein CJA_2652 (160 aa).

The protein belongs to the YajQ family.

Nucleotide-binding protein. This chain is Nucleotide-binding protein CJA_2652, found in Cellvibrio japonicus (strain Ueda107) (Pseudomonas fluorescens subsp. cellulosa).